The chain runs to 246 residues: UPF0736 protein Aflv_2136 (246 aa).

This sequence belongs to the UPF0736 family.

The sequence is that of UPF0736 protein Aflv_2136 from Anoxybacillus flavithermus (strain DSM 21510 / WK1).